We begin with the raw amino-acid sequence, 364 residues long: Protein Wnt-16 (364 aa).

A signal peptide spans 1-29; the sequence is MDRAALLALPSLCALWAAVLSLLPCGTQG. 3 cysteine pairs are disulfide-bonded: Cys-81-Cys-92, Cys-138-Cys-146, and Cys-148-Cys-167. Residue Asn-142 is glycosylated (N-linked (GlcNAc...) asparagine). An N-linked (GlcNAc...) asparagine glycan is attached at Asn-188. 8 cysteine pairs are disulfide-bonded: Cys-220–Cys-234, Cys-222–Cys-229, Cys-293–Cys-324, Cys-309–Cys-319, Cys-323–Cys-363, Cys-339–Cys-354, Cys-341–Cys-351, and Cys-346–Cys-347. Ser-226 is lipidated: O-palmitoleoyl serine; by PORCN. The N-linked (GlcNAc...) asparagine glycan is linked to Asn-310.

Belongs to the Wnt family. Palmitoleoylation is required for efficient binding to frizzled receptors. Depalmitoleoylation leads to Wnt signaling pathway inhibition.

The protein resides in the secreted. It is found in the extracellular space. It localises to the extracellular matrix. Functionally, ligand for members of the frizzled family of seven transmembrane receptors. Probable developmental protein. May be a signaling molecule which affects the development of discrete regions of tissues. Is likely to signal over only few cell diameters. The polypeptide is Protein Wnt-16 (Wnt16) (Mus musculus (Mouse)).